The sequence spans 431 residues: Divergent protein kinase domain 1B (431 aa).

Residues 1-30 (MRRLRRLAHLVLFCPFSKRLQGRLPGLRVR) are Cytoplasmic-facing. The May mediate ER retention motif lies at 5–6 (RR). Residues 31-51 (CIFLAWLGVFAGSWLVYVHYS) traverse the membrane as a helical segment. Residues 52 to 431 (SYSERCRGHV…WKKISNTKYS (380 aa)) lie on the Lumenal side of the membrane. Disulfide bonds link C57–C94 and C62–C117.

This sequence belongs to the DIPK family. Post-translationally, among the many cysteines in the lumenal domain, most are probably involved in disulfide bonds.

Its subcellular location is the endoplasmic reticulum membrane. This Homo sapiens (Human) protein is Divergent protein kinase domain 1B.